Consider the following 314-residue polypeptide: Probable phytol kinase 1, chloroplastic (314 aa).

The N-terminal 62 residues, 1 to 62, are a transit peptide targeting the chloroplast; sequence MAAAARPVDV…GVGAAAAPAV (62 aa). The next 7 helical transmembrane spans lie at 72–91, 111–131, 135–155, 181–201, 234–254, 266–286, and 294–314; these read AALRDCAATLLITAGAYSLV, IVHVLSGVLFMSSWPLFSNST, FFAAIVPLLNCIRLLTYGLRL, YVIVLLVSVLVFWRQSPIGIV, IGSISMFISGFLLSALMLFYF, LALGKLALVALAATVVECIPV, and ISVPLATMLAAYLLFGYSSCC.

This sequence belongs to the polyprenol kinase family.

The protein resides in the plastid. It localises to the chloroplast membrane. The enzyme catalyses phytol + CTP = phytyl phosphate + CDP + H(+). It participates in cofactor biosynthesis; tocopherol biosynthesis. Functionally, involved in the activation and reutilization of phytol from chlorophyll degradation in plant metabolism, including tocopherol biosynthesis. Catalyzes the conversion of phytol to phytol monophosphate (PMP). The protein is Probable phytol kinase 1, chloroplastic of Oryza sativa subsp. japonica (Rice).